We begin with the raw amino-acid sequence, 133 residues long: Ribosome-binding factor A (133 aa).

It belongs to the RbfA family. Monomer. Binds 30S ribosomal subunits, but not 50S ribosomal subunits or 70S ribosomes.

Its subcellular location is the cytoplasm. Its function is as follows. One of several proteins that assist in the late maturation steps of the functional core of the 30S ribosomal subunit. Associates with free 30S ribosomal subunits (but not with 30S subunits that are part of 70S ribosomes or polysomes). Required for efficient processing of 16S rRNA. May interact with the 5'-terminal helix region of 16S rRNA. This Yersinia enterocolitica protein is Ribosome-binding factor A.